Here is a 319-residue protein sequence, read N- to C-terminus: Ankyrin repeat domain-containing protein 1 (319 aa).

Positions 63 to 89 form a coiled coil; it reads EKEREAELKKKKLEQRSKLENLEDLEI. ANK repeat units follow at residues 152-181, 185-214, 218-247, 251-280, and 284-315; these read YKRT…QIEF, LEST…KISA, LLST…DLNA, EGDT…DLNV, and AGKT…KASR.

Interacts with TTN/titin and YBX1. In terms of tissue distribution, expressed in heart. In postnatal neonatal heart, it is expressed in an asymmetrical way; left ventricle favored towards right ventricle. Whether or not this could be correlated with a hypertrophic heart is still a matter of debate. Levels increase gradually from newborn to adult.

The protein localises to the nucleus. In terms of biological role, may play an important role in endothelial cell activation. May act as a nuclear transcription factor that negatively regulates the expression of cardiac genes. This chain is Ankyrin repeat domain-containing protein 1 (ANKRD1), found in Sus scrofa (Pig).